Consider the following 488-residue polypeptide: Glutamyl-tRNA(Gln) amidotransferase subunit A (488 aa).

Catalysis depends on charge relay system residues Lys77 and Ser152. Catalysis depends on Ser176, which acts as the Acyl-ester intermediate.

This sequence belongs to the amidase family. GatA subfamily. As to quaternary structure, heterotrimer of A, B and C subunits.

The enzyme catalyses L-glutamyl-tRNA(Gln) + L-glutamine + ATP + H2O = L-glutaminyl-tRNA(Gln) + L-glutamate + ADP + phosphate + H(+). Its function is as follows. Allows the formation of correctly charged Gln-tRNA(Gln) through the transamidation of misacylated Glu-tRNA(Gln) in organisms which lack glutaminyl-tRNA synthetase. The reaction takes place in the presence of glutamine and ATP through an activated gamma-phospho-Glu-tRNA(Gln). The protein is Glutamyl-tRNA(Gln) amidotransferase subunit A of Streptococcus pyogenes serotype M6 (strain ATCC BAA-946 / MGAS10394).